A 502-amino-acid polypeptide reads, in one-letter code: Probable malate:quinone oxidoreductase (502 aa).

The protein belongs to the MQO family. Requires FAD as cofactor.

The enzyme catalyses (S)-malate + a quinone = a quinol + oxaloacetate. Its pathway is carbohydrate metabolism; tricarboxylic acid cycle; oxaloacetate from (S)-malate (quinone route): step 1/1. In Synechococcus sp. (strain CC9605), this protein is Probable malate:quinone oxidoreductase.